We begin with the raw amino-acid sequence, 49 residues long: Large ribosomal subunit protein bL33 (49 aa).

It belongs to the bacterial ribosomal protein bL33 family.

This chain is Large ribosomal subunit protein bL33, found in Syntrophomonas wolfei subsp. wolfei (strain DSM 2245B / Goettingen).